The sequence spans 395 residues: Univin (395 aa).

An N-terminal signal peptide occupies residues 1–19 (MDVSKVLILTLIWLLTADS). Residues 20–272 (APPDYVTLTR…CSKRNRRNKR (253 aa)) constitute a propeptide that is removed on maturation. N-linked (GlcNAc...) asparagine glycosylation occurs at asparagine 50. The tract at residues 69-97 (EGAAASRGGETEIGKEEEEDGRPCSETKL) is disordered. Residues asparagine 116 and asparagine 336 are each glycosylated (N-linked (GlcNAc...) asparagine). Intrachain disulfides connect cysteine 294–cysteine 360, cysteine 323–cysteine 392, and cysteine 327–cysteine 394.

It belongs to the TGF-beta family. In terms of assembly, homodimer; disulfide-linked.

Its subcellular location is the secreted. Its function is as follows. Could have a critical role in early developmental decisions in the sea urchin embryo. In Strongylocentrotus purpuratus (Purple sea urchin), this protein is Univin.